We begin with the raw amino-acid sequence, 1138 residues long: Nonsense-mediated mRNA decay factor SMG7 (1138 aa).

Ser-2 bears the N-acetylserine mark. TPR repeat units follow at residues 152 to 185 (QHCL…VPSN) and 187 to 219 (QPYN…KFPF). Disordered regions lie at residues 515–612 (ATDG…LPSR), 649–745 (STAH…YQQA), 838–871 (QPNM…KSSP), 990–1090 (SLPA…PSME), and 1106–1138 (SSMM…NPPH). Position 519 is a phosphoserine (Ser-519). Residues 525-537 (VLSTGRNPSNSCD) show a composition bias toward polar residues. Positions 548 to 582 (ENIKPREVNQGRSFPPKEVKSQTELRKTPVSEARK) are enriched in basic and acidic residues. Phosphothreonine is present on Thr-575. Polar residues-rich tracts occupy residues 584-597 (PVTQ…NSQF) and 649-673 (STAH…SQQR). The span at 674 to 721 (PSGPGPMNQGPQQSQPPSQPPLTSLPAQPTAQSTSQLQVQALAQQQQS) shows a compositional bias: low complexity. Phosphoserine is present on residues Ser-732 and Ser-848. The segment covering 854–868 (PEQDPVPRMPFEDPK) has biased composition (basic and acidic residues). The span at 990–999 (SLPASSDHST) shows a compositional bias: polar residues. Positions 1000-1026 (PASQSPHSSNPSSLPSSPPTHNHNSAP) are enriched in low complexity. Residues 1037-1051 (DNRDRRPADRWKTDK) are compositionally biased toward basic and acidic residues. The segment covering 1063-1082 (SATSSSESSWHQASTPSGTW) has biased composition (polar residues). The segment covering 1118-1132 (QLLMQQKQKQQRGQG) has biased composition (low complexity).

Part of a complex that contains SMG5, SMG7, PPP2CA, a short isoform of UPF3A (isoform UPF3AS, but not isoform UPF3AL) and phosphorylated UPF1. Interacts with DHX34; the interaction is RNA-independent.

It localises to the cytoplasm. Its subcellular location is the nucleus. Functionally, plays a role in nonsense-mediated mRNA decay. Recruits UPF1 to cytoplasmic mRNA decay bodies. Together with SMG5 is thought to provide a link to the mRNA degradation machinery involving exonucleolytic pathways, and to serve as an adapter for UPF1 to protein phosphatase 2A (PP2A), thereby triggering UPF1 dephosphorylation. The chain is Nonsense-mediated mRNA decay factor SMG7 from Mus musculus (Mouse).